The sequence spans 790 residues: MSLFGSSPPNDGSAALNPAKTANSSRSTLFDNEAPTTRSGSALFADDDHDSPWDMPTPRKQRSRADLIRNLLPSGDVPESYIETFDAVVRTENRSTNGRITAGGVARTLAAAKLGADDQARIMGIIAPASASATGAGGGGDGAHGGEANSSAAAAAAAVGLGDLGRNEFNVLLALIGLVQEGEVASLDGVDERRRNLPQPKLQGLVNENVQPMLPNLSELGAKPPQRPVTPPKAPTPSPPKQQQQQQHQPPTLRKVSMEYPEDPWNAPDLHKGHNHGPLEHSTGHNGAADVPRSVANDLNGNDAVSYSTSPEVTTTSSALPGRTTSTFTTSQPPSGPSSIHNVAESIQESNGAWNYFPGSSSGGGFGEPADNAITGPFGDSGGPGQSVSGSVGGSNPNRSIGHVRSGSNVEENILVTLMPEKEGVFMFQHHNYEVSSIRRGSKVVRRYSDFVWLLDCLHKRYPFRVLPLLPPKRVAFNGNHLSNDGAFIEKRRRGLARFLNALVRHPVLGQEQLVIMFLTVPTELSVWRKQATISVQDEFTGRTLPPGLEDSLPPTLEELFARTRVGVRRSAELYISTCTIMDRLIKRSEGVAADHARMAVSLISLTETSADTYATDHNDVPLLNDGLQAMGRHLRTAQTLMEDEAKAWEEGVLEDLKRQRDALVSLRDMFDRRDRLDKDNIPFLQRRIETNEAKLQALNAKPEGMVKPGEKERVVEAIIKDKESIVTQHNRSVFVKECIRDELRFFQNTQYNVSRLTQDWAQERVKYSEMLADNWRRLLDDLEGMPLGD.

Polar residues-rich tracts occupy residues 1–10 and 20–40; these read MSLFGSSPPN and KTAN…TRSG. 3 disordered regions span residues 1 to 62, 215 to 342, and 373 to 406; these read MSLF…RKQR, PNLS…SIHN, and AITG…HVRS. Residues 225-240 are compositionally biased toward pro residues; that stretch reads PQRPVTPPKAPTPSPP. Over residues 241-252 the composition is skewed to low complexity; it reads KQQQQQQHQPPT. Over residues 269-283 the composition is skewed to basic and acidic residues; sequence DLHKGHNHGPLEHST. Over residues 297-319 the composition is skewed to polar residues; sequence NDLNGNDAVSYSTSPEVTTTSSA. Composition is skewed to low complexity over residues 324–339 and 386–400; these read TTST…GPSS and QSVS…PNRS. Residues 411–525 enclose the PX domain; sequence EENILVTLMP…IMFLTVPTEL (115 aa). A 1,2-diacyl-sn-glycero-3-phospho-(1D-myo-inositol-3-phosphate) is bound by residues R447, S449, K473, and R492.

Belongs to the sorting nexin family.

The protein localises to the cytoplasm. It localises to the membrane. Required for vacuolar protein sorting. The polypeptide is Sorting nexin mvp1 (vsp-1) (Neurospora crassa (strain ATCC 24698 / 74-OR23-1A / CBS 708.71 / DSM 1257 / FGSC 987)).